A 417-amino-acid polypeptide reads, in one-letter code: Carboxypeptidase B (417 aa).

An N-terminal signal peptide occupies residues 1 to 16; the sequence is MLAFLILVTVTLASAH. A propeptide spans 17–110 (activation peptide); it reads HSGEHFEGDK…LEAQFDSRVR (94 aa). Positions 118–412 constitute a Peptidase M14 domain; it reads KYNNWETIEA…LAIKYVTSYV (295 aa). An intrachain disulfide couples Cys-173 to Cys-186. Zn(2+) contacts are provided by His-176 and Glu-179. Residues 176-179, Arg-234, and 251-252 each bind substrate; these read HARE and NR. 2 disulfides stabilise this stretch: Cys-245-Cys-268 and Cys-259-Cys-273. His-304 provides a ligand contact to Zn(2+). Substrate contacts are provided by residues 305-306 and Tyr-356; that span reads SY. The Proton donor/acceptor role is filled by Glu-378.

It belongs to the peptidase M14 family. Requires Zn(2+) as cofactor.

The protein localises to the secreted. Its subcellular location is the zymogen granule lumen. It carries out the reaction Preferential release of a C-terminal lysine or arginine amino acid.. The polypeptide is Carboxypeptidase B (CPB1) (Bos taurus (Bovine)).